Here is a 98-residue protein sequence, read N- to C-terminus: Feather beta keratin (98 aa).

Serine 2 is subject to N-acetylserine.

It belongs to the avian keratin family. The avian keratins (F-ker, S-ker, C-ker and B-ker) are a complex mixture of very similar polypeptides.

The protein is Feather beta keratin of Cathartes aura (Turkey vulture).